A 380-amino-acid chain; its full sequence is MNPSRRSPLTWAVHLSVLLLVLLWTLPTAGLLISSLRDKDQLAVSGWWTALSSSSRNAVVRAPSAEDQVERDGKFVISGNLLEGRGEVSAFGFSSREPTKFKPGETAELNDGERLTVQSDGSFEIVSDQRMEGSRGQRIFFTATTPPRFTLDNYAEVLSAAGIGRSFLNSLTVAVPSTVIPILIAAFAAYALAWMPFPGRAVLLAVVVGLLVVPLQMSLIPLLQLYNGVGAFFGVSAKTYMGIWLAHTGFGLPLAIYLLRNYMAGLPREIMESARVDGASDFDIFVKIILPLSFPALASFAIFQFLWTWNDLLVAIVFLGAGDDKLVLTGRLVNLLGSRGGNWEILTASAFITIVVPLIVFFALQRYLVRGLLAGSVKGG.

6 helical membrane passes run 13–33 (VHLS…GLLI), 179–199 (VIPI…PFPG), 202–222 (VLLA…LIPL), 239–259 (TYMG…IYLL), 288–308 (IILP…FLWT), and 344–364 (EILT…FFAL). In terms of domain architecture, ABC transmembrane type-1 spans 167–364 (FLNSLTVAVP…VVPLIVFFAL (198 aa)).

It belongs to the binding-protein-dependent transport system permease family. MalFG subfamily.

The protein resides in the cell inner membrane. Its function is as follows. Part of the binding-protein-dependent transport system for alpha-glucosides such as sucrose, maltose and trehalose. Probably responsible for the translocation of the substrate across the membrane. This is Alpha-glucoside transport system permease protein AglG (aglG) from Rhizobium meliloti (strain 1021) (Ensifer meliloti).